Reading from the N-terminus, the 327-residue chain is Sphingomyelin synthase-related 2 (327 aa).

5 helical membrane-spanning segments follow: residues 54–74, 99–119, 131–151, 192–212, and 220–240; these read LLATAMVGVGWLSNEVALAWV, AIRIAEYIMMILLISALLVMF, VFFCIAMAYSFRALCVTIFQV, LCGDLIVSGHTLTIFTAFLVF, and LQPLSHIYHVLAFTALFSILL. Histidine 201 is an active-site residue. Over 241-327 the chain is Cytoplasmic; that stretch reads ARKHYMIDIV…TLKKSRRSFE (87 aa). Active-site residues include histidine 244 and aspartate 248.

This sequence belongs to the sphingomyelin synthase family.

The protein resides in the membrane. This is Sphingomyelin synthase-related 2 from Caenorhabditis elegans.